The following is a 262-amino-acid chain: Ribonuclease 3 (262 aa).

Residues 18-141 (LATFLKNLDI…LVGAIYEDMG (124 aa)) enclose the RNase III domain. Residue E59 participates in Mg(2+) binding. The active site involves D63. 2 residues coordinate Mg(2+): D127 and E130. Residue E130 is part of the active site.

This sequence belongs to the ribonuclease III family. As to quaternary structure, homodimer. It depends on Mg(2+) as a cofactor.

The protein localises to the cytoplasm. It carries out the reaction Endonucleolytic cleavage to 5'-phosphomonoester.. Digests double-stranded RNA. Involved in the processing of primary rRNA transcript to yield the immediate precursors to the large and small rRNAs (23S and 16S). Processes some mRNAs, and tRNAs when they are encoded in the rRNA operon. Processes pre-crRNA and tracrRNA of type II CRISPR loci if present in the organism. The sequence is that of Ribonuclease 3 from Mycoplasma genitalium (strain ATCC 33530 / DSM 19775 / NCTC 10195 / G37) (Mycoplasmoides genitalium).